The chain runs to 250 residues: Proteasome subunit alpha (250 aa).

This sequence belongs to the peptidase T1A family. The 20S proteasome core is composed of 14 alpha and 14 beta subunits that assemble into four stacked heptameric rings, resulting in a barrel-shaped structure. The two inner rings, each composed of seven catalytic beta subunits, are sandwiched by two outer rings, each composed of seven alpha subunits. The catalytic chamber with the active sites is on the inside of the barrel. Has a gated structure, the ends of the cylinder being occluded by the N-termini of the alpha-subunits. Is capped at one or both ends by the proteasome regulatory ATPase, PAN.

The protein localises to the cytoplasm. Its activity is regulated as follows. The formation of the proteasomal ATPase PAN-20S proteasome complex, via the docking of the C-termini of PAN into the intersubunit pockets in the alpha-rings, triggers opening of the gate for substrate entry. Interconversion between the open-gate and close-gate conformations leads to a dynamic regulation of the 20S proteasome proteolysis activity. Functionally, component of the proteasome core, a large protease complex with broad specificity involved in protein degradation. The protein is Proteasome subunit alpha of Methanobrevibacter smithii (strain ATCC 35061 / DSM 861 / OCM 144 / PS).